Reading from the N-terminus, the 148-residue chain is uncharacterized protein (148 aa).

The first 22 residues, 1 to 22 (MVQTVLNSVWLWRSVLLRLTFS), serve as a signal peptide directing secretion.

This is an uncharacterized protein from Saccharomyces cerevisiae (strain ATCC 204508 / S288c) (Baker's yeast).